Consider the following 476-residue polypeptide: Probable flippase AglR (476 aa).

14 helical membrane passes run 7–29, 34–56, 83–103, 112–132, 146–166, 168–188, 222–242, 246–266, 287–307, 310–330, 354–373, 377–396, 409–429, and 439–459; these read ASAL…TIYV, GVGA…IPAV, VLTG…SPFV, TQLV…LGGL, ALWG…GVGV, ALFY…VYSL, WLDT…IYEV, ISAL…PTIS, VAGV…GDIL, YGPS…LSVV, FRIG…SLIP, VIGA…ILAV, VSAI…LFTI, and IEVV…LLSL.

It belongs to the AglR/Agl15 family.

Its subcellular location is the cell membrane. It participates in cell surface structure biogenesis; S-layer biogenesis. In terms of biological role, involved in the assembly of a N-linked pentasaccharide that decorates the S-layer glycoprotein and flagellins. Probably mediates or contributes to the translocation of the dolichol-phosphate-mannose across the membrane. The protein is Probable flippase AglR (aglR) of Haloferax volcanii (strain ATCC 29605 / DSM 3757 / JCM 8879 / NBRC 14742 / NCIMB 2012 / VKM B-1768 / DS2) (Halobacterium volcanii).